A 193-amino-acid chain; its full sequence is Ion-translocating oxidoreductase complex subunit A (193 aa).

Helical transmembrane passes span 5 to 25 (ILLI…FLGL), 39 to 59 (IGMG…AYLV), 72 to 92 (LRTL…EMVI), 102 to 122 (LLGI…VALL), 134 to 154 (VIYG…FAAL), and 171 to 191 (SIAL…SGLV).

The protein belongs to the NqrDE/RnfAE family. As to quaternary structure, the complex is composed of six subunits: RnfA, RnfB, RnfC, RnfD, RnfE and RnfG.

The protein resides in the cell inner membrane. Part of a membrane-bound complex that couples electron transfer with translocation of ions across the membrane. This Histophilus somni (strain 2336) (Haemophilus somnus) protein is Ion-translocating oxidoreductase complex subunit A.